The primary structure comprises 558 residues: Urocanate hydratase (558 aa).

Residues 54 to 55 (GG), Gln-132, 178 to 180 (GMG), Glu-198, 244 to 245 (NA), 265 to 269 (QTSAH), 275 to 276 (YL), and Tyr-324 contribute to the NAD(+) site. The active site involves Cys-412. Gly-494 contacts NAD(+).

Belongs to the urocanase family. It depends on NAD(+) as a cofactor.

The protein localises to the cytoplasm. It carries out the reaction 4-imidazolone-5-propanoate = trans-urocanate + H2O. It participates in amino-acid degradation; L-histidine degradation into L-glutamate; N-formimidoyl-L-glutamate from L-histidine: step 2/3. Catalyzes the conversion of urocanate to 4-imidazolone-5-propionate. This Acinetobacter baumannii (strain SDF) protein is Urocanate hydratase.